The chain runs to 443 residues: MSAIVAANSPRVGFVSLGCPKALVDSERILTQLRVEGYEIVGGYEEADVVVVNTCAFIEAAQAESLDAIGEALDENGKVVVTGCLGTKGDLIRETHPGVLAITGPQDYEAVMAAVHAQCPPPARDAFTGLLPASGVKLTPRHYAYLKISEGCNHHCTFCIIPQLRGRLVSRPVDQVLAEAERLVGDGVRELLVISQDTSAYGVDTRYAAAEWRGVPRRTRMTELADALAELGVWVRLHYVYPYPHVDELIPLMAEGRIAPYLDMPLQHASPRILKAMRRPAGGEAVLERIRRWRQRCPDLTLRSTFIVGFPGETEDDFQVLLEFLEAAELDRVGCFTYSPVEGAAANALADPVPEAIAEQRQARLMALQAEISARRLARRVGTECTVLLDAVDGDAAVGRSQLEAPEVDGVIHLRGAEGCAPGQWVPARLEDADEHDLYGRVL.

In terms of domain architecture, MTTase N-terminal spans 10-120 (PRVGFVSLGC…VMAAVHAQCP (111 aa)). [4Fe-4S] cluster-binding residues include Cys-19, Cys-55, Cys-84, Cys-152, Cys-156, and Cys-159. Residues 138–375 (LTPRHYAYLK…MALQAEISAR (238 aa)) enclose the Radical SAM core domain. The TRAM domain occupies 378 to 443 (ARRVGTECTV…DEHDLYGRVL (66 aa)).

Belongs to the methylthiotransferase family. RimO subfamily. It depends on [4Fe-4S] cluster as a cofactor.

The protein localises to the cytoplasm. The enzyme catalyses L-aspartate(89)-[ribosomal protein uS12]-hydrogen + (sulfur carrier)-SH + AH2 + 2 S-adenosyl-L-methionine = 3-methylsulfanyl-L-aspartate(89)-[ribosomal protein uS12]-hydrogen + (sulfur carrier)-H + 5'-deoxyadenosine + L-methionine + A + S-adenosyl-L-homocysteine + 2 H(+). In terms of biological role, catalyzes the methylthiolation of an aspartic acid residue of ribosomal protein uS12. The sequence is that of Ribosomal protein uS12 methylthiotransferase RimO from Alkalilimnicola ehrlichii (strain ATCC BAA-1101 / DSM 17681 / MLHE-1).